The chain runs to 443 residues: Signal recognition particle 54 kDa protein (443 aa).

GTP-binding positions include 107-114, 189-193, and 247-250; these read GIQGSGKT, DTAGR, and TKLD.

This sequence belongs to the GTP-binding SRP family. SRP54 subfamily. As to quaternary structure, part of the signal recognition particle protein translocation system, which is composed of SRP and FtsY. Archaeal SRP consists of a 7S RNA molecule of 300 nucleotides and two protein subunits: SRP54 and SRP19.

The protein resides in the cytoplasm. The enzyme catalyses GTP + H2O = GDP + phosphate + H(+). Its function is as follows. Involved in targeting and insertion of nascent membrane proteins into the cytoplasmic membrane. Binds to the hydrophobic signal sequence of the ribosome-nascent chain (RNC) as it emerges from the ribosomes. The SRP-RNC complex is then targeted to the cytoplasmic membrane where it interacts with the SRP receptor FtsY. The chain is Signal recognition particle 54 kDa protein from Pyrococcus furiosus (strain ATCC 43587 / DSM 3638 / JCM 8422 / Vc1).